Reading from the N-terminus, the 493-residue chain is Dipeptidase 3 (493 aa).

A signal peptide spans 1-35; it reads MQPAGLEGPRALGLRPLGHRLSLLGVLLLVPSLWV. Low complexity predominate over residues 41–60; sequence TPSPSSAPTTPEASNATTAP. The segment at 41–74 is disordered; it reads TPSPSSAPTTPEASNATTAPGIPNDTATSGVTSD. Intrachain disulfides connect cysteine 143–cysteine 222 and cysteine 294–cysteine 326. Asparagine 331 is a glycosylation site (N-linked (GlcNAc...) asparagine). Residue serine 462 is the site of GPI-anchor amidated serine attachment. Positions 463 to 493 are cleaved as a propeptide — removed in mature form; the sequence is KAPPHPLPGLMATLTSLALILWLCCSGHRAV.

The protein belongs to the metallo-dependent hydrolases superfamily. Peptidase M19 family. Homodimer; disulfide-linked. Interacts with TEX101; co-localized on the cell surface of spermatocytes, spermatids, and testicular spermatozoa, co-localized only in cytoplasmic droplets of caput and corpus epididymal sperm. As to expression, expressed in testis but not ovary.

The protein localises to the membrane. Lacks dipeptidase activity and is unable to hydrolyze cystinyl-bis-glycine. The absence of activity may be due to the inability of serine (instead of aspartate found in DPEP1/2) at position 356 to function as the acid/base catalyst and activate the nucleophilic water/hydroxide. Does not hydrolyze leukotriene D4 (LTD4) into leukotriene E4 (LTE4). Does not hydrolyze the beta-lactam antibiotic imipenem. This is Dipeptidase 3 (Dpep3) from Mus musculus (Mouse).